Reading from the N-terminus, the 467-residue chain is AT-rich interactive domain-containing protein cfi-1 (467 aa).

The tract at residues 1–56 (MSVRIDEPQLFVSMSKEPTQETVNVGGHHDDSSSNCDERVDDQTEEQKSPPASPDL) is disordered. Positions 27-48 (GHHDDSSSNCDERVDDQTEEQK) are enriched in basic and acidic residues. The region spanning 181–273 (DVKRKEWLDD…YLYDYECEKE (93 aa)) is the ARID domain. The region spanning 356 to 464 (AILEAHQRNL…GVLFALDETV (109 aa)) is the REKLES domain. The segment at 383–441 (LTACSNGNGGNIHNSGRESTSSNDSDIPAKRPKLENDVKTNGASSMRISTKHSDNSKTS) is disordered. A compositionally biased stretch (basic and acidic residues) spans 409–420 (IPAKRPKLENDV). The span at 421–430 (KTNGASSMRI) shows a compositional bias: polar residues.

As to expression, present in IL2 and URA neurons, and in AVD and PVC interneurons. Present in muscles from head and pharynx (at protein level).

It localises to the nucleus. In terms of biological role, transcription factor. Regulates neuronal subtype identity. Involved in motor neuron fate determination and maintenance, acting as a transcriptional repressor to counteract gene activation by transcription factor unc-3 in a subset of motor neurons. Probably acts by binding to specific promoter elements. Promotes differentiation of URA sensory neurons and prevents them from expressing male-specific CEM neuronal features. Promotes differentiation of AVD and PVC interneurons and their glutamate receptor expression. The sequence is that of AT-rich interactive domain-containing protein cfi-1 (cfi-1) from Caenorhabditis elegans.